A 395-amino-acid polypeptide reads, in one-letter code: Elongation factor Tu (395 aa).

One can recognise a tr-type G domain in the interval 10–204 (KPHVNIGTIG…AVDEYIPTPQ (195 aa)). Residues 19–26 (GHVDHGKT) form a G1 region. 19–26 (GHVDHGKT) provides a ligand contact to GTP. Position 26 (threonine 26) interacts with Mg(2+). The tract at residues 60 to 64 (GITIS) is G2. The G3 stretch occupies residues 81-84 (DCPG). Residues 81–85 (DCPGH) and 136–139 (NKCD) contribute to the GTP site. Positions 136–139 (NKCD) are G4. The tract at residues 174–176 (SAL) is G5.

The protein belongs to the TRAFAC class translation factor GTPase superfamily. Classic translation factor GTPase family. EF-Tu/EF-1A subfamily. As to quaternary structure, monomer.

The protein resides in the cytoplasm. The enzyme catalyses GTP + H2O = GDP + phosphate + H(+). Its function is as follows. GTP hydrolase that promotes the GTP-dependent binding of aminoacyl-tRNA to the A-site of ribosomes during protein biosynthesis. In Geobacillus kaustophilus (strain HTA426), this protein is Elongation factor Tu.